Reading from the N-terminus, the 510-residue chain is UDP-N-acetylmuramoylalanine--D-glutamate ligase (510 aa).

An ATP-binding site is contributed by 138 to 144 (GTNGKTT). The disordered stretch occupies residues 294-316 (FDEPAPAPRRKKDAPPPTRAGGR).

It belongs to the MurCDEF family.

The protein localises to the cytoplasm. It catalyses the reaction UDP-N-acetyl-alpha-D-muramoyl-L-alanine + D-glutamate + ATP = UDP-N-acetyl-alpha-D-muramoyl-L-alanyl-D-glutamate + ADP + phosphate + H(+). It participates in cell wall biogenesis; peptidoglycan biosynthesis. Functionally, cell wall formation. Catalyzes the addition of glutamate to the nucleotide precursor UDP-N-acetylmuramoyl-L-alanine (UMA). The chain is UDP-N-acetylmuramoylalanine--D-glutamate ligase from Bordetella bronchiseptica (strain ATCC BAA-588 / NCTC 13252 / RB50) (Alcaligenes bronchisepticus).